Here is a 1025-residue protein sequence, read N- to C-terminus: MAPVLSKDVADIESILALNPRTQSHAALHSTLAKKLDKKHWKRNPDKNCFHCEKLENNFGDIKHTTLGERGALREAMRCLKCADAPCQKSCPTHLDIKSFITSISNKNYYGAAKMIFSDNPLGLTCGMVCPTSDLCVGGCNLYATEEGSINIGGLQQFASEVFKAMNIPQIRNPCLPSQEKMPEAYSAKIALLGAGPASISCASFLARLGYSDITIFEKQEYVGGLSTSEIPQFRLPYDVVNFEIELMKDLGVKIICGKSLSENEITLNTLKEEGYKAAFIGIGLPEPKTDDIFQGLTQDQGFYTSKDFLPLVAKSSKAGMCACHSPLPSIRGAVIVLGAGDTAFDCATSALRCGARRVFLVFRKGFVNIRAVPEEVELAKEEKCEFLPFLSPRKVIVKGGRIVAVQFVRTEQDETGKWNEDEDQIVHLKADVVISAFGSVLRDPKVKEALSPIKFNRWDLPEVDPETMQTSEPWVFAGGDIVGMANTTVESVNDGKQASWYIHKYIQAQYGASVSAKPELPLFYTPVDLVDISVEMAGLKFINPFGLASAAPTTSSSMIRRAFEAGWGFALTKTFSLDKDIVTNVSPRIVRGTTSGPMYGPGQSSFLNIELISEKTAAYWCQSVTELKADFPDNIVIASIMCSYNKNDWMELSRKAEASGADALELNLSCPHGMGERGMGLACGQDPELVRNICRWVRQAVQIPFFAKLTPNVTDIVSIARAAKEGGADGVTATNTVSGLMGLKADGTPWPAVGAGKRTTYGGVSGTAIRPIALRAVTTIARALPGFPILATGGIDSAESGLQFLHSGASVLQVCSAVQNQDFTVIQDYCTGLKALLYLKSIEELQGWDGQSPGTESHQKGKPVPRIAELMGKKLPNFGPYLEQRKKIIAEEKMRLKEQNAAFPPLERKPFIPKKPIPAIKDVIGKALQYLGTFGELSNIEQVVAVIDEEMCINCGKCYMTCNDSGYQAIQFDPETHLPTVTDTCTGCTLCLSVCPIIDCIRMVSRTTPYEPKRGLPLAVNPVC.

Positions 1 to 3 are excised as a propeptide; that stretch reads MAP. The region spanning 69-100 is the 4Fe-4S ferredoxin-type 1 domain; it reads ERGALREAMRCLKCADAPCQKSCPTHLDIKSF. Cysteine 79, cysteine 82, cysteine 87, and cysteine 91 together coordinate [4Fe-4S] cluster. Position 129 (valine 129) interacts with FAD. Residues cysteine 130, cysteine 136, cysteine 140, and glutamine 156 each coordinate [4Fe-4S] cluster. FAD contacts are provided by residues 194–198, 218–226, arginine 235, and leucine 261; these read GAGPA and EKQEYVGGL. NADP(+) is bound by residues 340 to 343, 364 to 365, and arginine 371; these read AGDT and RK. N6-acetyllysine is present on lysine 384. NADP(+) is bound by residues 437–439 and 481–487; these read AFG and DIVGMAN. Residue 480–489 coordinates FAD; sequence GDIVGMANTT. FMN contacts are provided by residues serine 550 and 574–575; that span reads KT. Substrate contacts are provided by residues asparagine 609 and 668 to 670; that span reads NLS. The Proton acceptor role is filled by cysteine 671. Residue lysine 709 participates in FMN binding. Residue 736–737 participates in substrate binding; the sequence is NT. Residues glycine 767, 793–795, and 816–817 contribute to the FMN site; these read TGG and CS. 2 consecutive 4Fe-4S ferredoxin-type domains span residues 944–976 and 978–1007; these read VVAV…FDPE and HLPT…MVSR. Residues cysteine 953, cysteine 956, cysteine 959, cysteine 963, cysteine 986, cysteine 989, cysteine 992, and cysteine 996 each contribute to the [4Fe-4S] cluster site.

It belongs to the dihydropyrimidine dehydrogenase family. Homodimer. FAD is required as a cofactor. It depends on FMN as a cofactor. The cofactor is [4Fe-4S] cluster.

It localises to the cytoplasm. The enzyme catalyses 5,6-dihydrouracil + NADP(+) = uracil + NADPH + H(+). It carries out the reaction 5,6-dihydrothymine + NADP(+) = thymine + NADPH + H(+). It functions in the pathway amino-acid biosynthesis; beta-alanine biosynthesis. With respect to regulation, inactivated by 5-iodouracil. In terms of biological role, involved in pyrimidine base degradation. Catalyzes the reduction of uracil and thymine. This chain is Dihydropyrimidine dehydrogenase [NADP(+)] (DPYD), found in Sus scrofa (Pig).